A 384-amino-acid chain; its full sequence is Probable inactive patatin-like protein 9 (384 aa).

The 202-residue stretch at 33-234 folds into the PNPLA domain; that stretch reads LSIDGGGTTG…VMNNPTAAAV (202 aa). The short motif at 37 to 42 is the GXGXXG element; sequence GGGTTG. Asp221 acts as the Proton acceptor in catalysis. Residues 221–223 carry the DGA/G motif; that stretch reads DGG. The disordered stretch occupies residues 363 to 384; that stretch reads GKSSLPPSPCKESAVNPLADGR.

It belongs to the patatin family. In terms of tissue distribution, highly expressed in roots and at lower levels in flowers and siliques.

The protein is Probable inactive patatin-like protein 9 (PLP9) of Arabidopsis thaliana (Mouse-ear cress).